Consider the following 221-residue polypeptide: Ribosomal RNA small subunit methyltransferase G (221 aa).

S-adenosyl-L-methionine contacts are provided by residues glycine 89, leucine 94, 140–141 (VE), and arginine 154.

This sequence belongs to the methyltransferase superfamily. RNA methyltransferase RsmG family.

The protein localises to the cytoplasm. It catalyses the reaction guanosine(527) in 16S rRNA + S-adenosyl-L-methionine = N(7)-methylguanosine(527) in 16S rRNA + S-adenosyl-L-homocysteine. Its function is as follows. Specifically methylates the N7 position of guanine in position 527 of 16S rRNA. This is Ribosomal RNA small subunit methyltransferase G from Methylibium petroleiphilum (strain ATCC BAA-1232 / LMG 22953 / PM1).